We begin with the raw amino-acid sequence, 79 residues long: Acyl carrier protein (79 aa).

The 76-residue stretch at 2–77 (SEIADKVKKI…DAIDYIEKQK (76 aa)) folds into the Carrier domain. Ser37 is modified (O-(pantetheine 4'-phosphoryl)serine).

This sequence belongs to the acyl carrier protein (ACP) family. 4'-phosphopantetheine is transferred from CoA to a specific serine of apo-ACP by AcpS. This modification is essential for activity because fatty acids are bound in thioester linkage to the sulfhydryl of the prosthetic group.

The protein resides in the cytoplasm. Its pathway is lipid metabolism; fatty acid biosynthesis. Its function is as follows. Carrier of the growing fatty acid chain in fatty acid biosynthesis. The protein is Acyl carrier protein of Gluconacetobacter diazotrophicus (strain ATCC 49037 / DSM 5601 / CCUG 37298 / CIP 103539 / LMG 7603 / PAl5).